A 151-amino-acid polypeptide reads, in one-letter code: FUN14 domain-containing protein 1A (151 aa).

A YXXL motif is present at residues 14-17; it reads YEVL. 3 consecutive transmembrane segments (helical) span residues 44–64, 71–91, and 130–150; these read YSVATQIVIGGVSGWCAGFLF, AATAVGGGFLLLQIASHGGYI, and FVKKNIVVSGGFVGGFLLGLA.

This sequence belongs to the FUN14 family.

It localises to the mitochondrion outer membrane. In terms of biological role, acts as an activator of hypoxia-induced mitophagy, an important mechanism for mitochondrial quality control. In Xenopus laevis (African clawed frog), this protein is FUN14 domain-containing protein 1A (fundc1-a).